The sequence spans 126 residues: 5-hydroxyisourate hydrolase (126 aa).

Histidine 16, arginine 54, and tyrosine 123 together coordinate substrate.

This sequence belongs to the transthyretin family. 5-hydroxyisourate hydrolase subfamily. In terms of assembly, homotetramer.

It carries out the reaction 5-hydroxyisourate + H2O = 5-hydroxy-2-oxo-4-ureido-2,5-dihydro-1H-imidazole-5-carboxylate + H(+). Functionally, catalyzes the hydrolysis of 5-hydroxyisourate (HIU) to 2-oxo-4-hydroxy-4-carboxy-5-ureidoimidazoline (OHCU). This chain is 5-hydroxyisourate hydrolase, found in Pseudomonas aeruginosa (strain ATCC 15692 / DSM 22644 / CIP 104116 / JCM 14847 / LMG 12228 / 1C / PRS 101 / PAO1).